The primary structure comprises 107 residues: Non-structural protein 1, peptide 1 (107 aa).

A helical transmembrane segment spans residues 39–59 (ILLAAGVGIIATLLVLLLCSC).

Belongs to the rotavirus B NSP1-1 family.

It localises to the host membrane. In Homo sapiens (Human), this protein is Non-structural protein 1, peptide 1.